We begin with the raw amino-acid sequence, 60 residues long: Large ribosomal subunit protein uL30 (60 aa).

This sequence belongs to the universal ribosomal protein uL30 family. As to quaternary structure, part of the 50S ribosomal subunit.

This Bacillus pumilus (strain SAFR-032) protein is Large ribosomal subunit protein uL30.